The chain runs to 179 residues: Arginine repressor (179 aa).

This sequence belongs to the ArgR family.

It is found in the cytoplasm. Its pathway is amino-acid biosynthesis; L-arginine biosynthesis [regulation]. In terms of biological role, regulates arginine biosynthesis genes. The polypeptide is Arginine repressor (Renibacterium salmoninarum (strain ATCC 33209 / DSM 20767 / JCM 11484 / NBRC 15589 / NCIMB 2235)).